The sequence spans 327 residues: Undecaprenyl-phosphate 4-deoxy-4-formamido-L-arabinose transferase (327 aa).

The Cytoplasmic portion of the chain corresponds to 1 to 235 (MFDAAPIKKV…TCLTTTPLRL (235 aa)). The helical transmembrane segment at 236 to 256 (LSLLGSVIAIGGFSLSVLLIV) threads the bilayer. Over 257-269 (LRLALGPQWAAEG) the chain is Periplasmic. Residues 270 to 290 (VFMLFAVLFTFIGAQFIGMGL) form a helical membrane-spanning segment. The Cytoplasmic portion of the chain corresponds to 291–327 (LGEYIGRIYNDVRARPRYFVQQVIYPESTPFTEESHQ).

The protein belongs to the glycosyltransferase 2 family.

It localises to the cell inner membrane. It catalyses the reaction UDP-4-deoxy-4-formamido-beta-L-arabinose + di-trans,octa-cis-undecaprenyl phosphate = 4-deoxy-4-formamido-alpha-L-arabinopyranosyl di-trans,octa-cis-undecaprenyl phosphate + UDP. It participates in glycolipid biosynthesis; 4-amino-4-deoxy-alpha-L-arabinose undecaprenyl phosphate biosynthesis; 4-amino-4-deoxy-alpha-L-arabinose undecaprenyl phosphate from UDP-4-deoxy-4-formamido-beta-L-arabinose and undecaprenyl phosphate: step 1/2. Its pathway is bacterial outer membrane biogenesis; lipopolysaccharide biosynthesis. Catalyzes the transfer of 4-deoxy-4-formamido-L-arabinose from UDP to undecaprenyl phosphate. The modified arabinose is attached to lipid A and is required for resistance to polymyxin and cationic antimicrobial peptides. This chain is Undecaprenyl-phosphate 4-deoxy-4-formamido-L-arabinose transferase, found in Salmonella choleraesuis (strain SC-B67).